We begin with the raw amino-acid sequence, 316 residues long: Nautilin-63 (316 aa).

Disordered regions lie at residues isoleucine 1–glycine 26, proline 149–phenylalanine 173, aspartate 189–serine 238, and proline 259–lysine 278. The span at threonine 10–glycine 26 shows a compositional bias: low complexity. Polar residues-rich tracts occupy residues threonine 152–glutamine 163, glycine 207–serine 216, and serine 269–lysine 278.

Post-translationally, glycosylated; contains mainly glucose, galactose, galactosamine, glucosamine and glucuronic acid. Component of the acid-soluble organic matrix of nacreous shell layers (at protein level).

The protein resides in the secreted. Its function is as follows. Involved in nacre formation. Affects morphology of calcite crystals in vitro but does not inhibit their formation. Binds chitin. This chain is Nautilin-63, found in Nautilus macromphalus (Bellybutton nautilus).